Consider the following 349-residue polypeptide: Quinolinate synthase (349 aa).

2 residues coordinate iminosuccinate: H52 and S69. C114 serves as a coordination point for [4Fe-4S] cluster. Residues 140 to 142 and S157 contribute to the iminosuccinate site; that span reads YVN. A [4Fe-4S] cluster-binding site is contributed by C201. Residues 227 to 229 and T255 each bind iminosuccinate; that span reads HPE. C300 provides a ligand contact to [4Fe-4S] cluster.

The protein belongs to the quinolinate synthase family. Type 2 subfamily. Requires [4Fe-4S] cluster as cofactor.

It is found in the cytoplasm. The enzyme catalyses iminosuccinate + dihydroxyacetone phosphate = quinolinate + phosphate + 2 H2O + H(+). It functions in the pathway cofactor biosynthesis; NAD(+) biosynthesis; quinolinate from iminoaspartate: step 1/1. Functionally, catalyzes the condensation of iminoaspartate with dihydroxyacetone phosphate to form quinolinate. The protein is Quinolinate synthase of Mycobacterium bovis (strain BCG / Tokyo 172 / ATCC 35737 / TMC 1019).